The sequence spans 596 residues: MMRTHYCGQVTEILENQQVTVSGWVHRRRDHGGVIFIDLRDREGLVQVVVNPDNAEMFAIAERVRSEYVLKVEGKVCARTPETINPKMNTGKIEIVAESLEVLSSAEPIPFQLDDKHISEEVRLTYRYLDLRREEMQSTMRTRYRVTRSMRRYLDDNGFMDMETPILTKSTPEGARDYLVPSRTHPNKFFALPQSPQLFKQLLMMSGFDRYYQITRCFRDEDLRADRQPEFTQLDIETSFMTEEEVMNMMEGLTKTIFREGVDVNFEDDFPRMTYAEAIEKYGIDRPDLRIPLQLVDVADLLQDIDFKVFAGPAKDPMGRVAALRVPQGGKLSRKEIDDYTKYVGIYGAKGLAYIKVNDLSAGLDGLQSPIVKFFPDQAMEIMQRVGAEDGDIVFFGADNAKIVNEALGALRCKIGEDLDMIEKEWAPVWVVDFPMFEMDEKTAKMTAIHHPFTQPKATTEEILNHDEPHQMLSRAYDLVINGIEVGGGSVRIHDTHMQAAVLKMLGISDEDAQEKFGFLLNALKYGCPPHAGMAFGLDRLVMLMAKRDSIRDVIAFPKTQSAACMLTDAPGNVDNTQLADLELRFRKSLVAKDAS.

Residue E173 participates in L-aspartate binding. The tract at residues 197–200 (QLFK) is aspartate. Position 219 (R219) interacts with L-aspartate. ATP is bound by residues 219 to 221 (RDE) and Q228. H450 lines the L-aspartate pocket. E485 contributes to the ATP binding site. Residue R492 participates in L-aspartate binding. 537–540 (GLDR) lines the ATP pocket.

Belongs to the class-II aminoacyl-tRNA synthetase family. Type 1 subfamily. Homodimer.

The protein resides in the cytoplasm. The enzyme catalyses tRNA(Asx) + L-aspartate + ATP = L-aspartyl-tRNA(Asx) + AMP + diphosphate. Functionally, aspartyl-tRNA synthetase with relaxed tRNA specificity since it is able to aspartylate not only its cognate tRNA(Asp) but also tRNA(Asn). Reaction proceeds in two steps: L-aspartate is first activated by ATP to form Asp-AMP and then transferred to the acceptor end of tRNA(Asp/Asn). This Hydrogenovibrio crunogenus (strain DSM 25203 / XCL-2) (Thiomicrospira crunogena) protein is Aspartate--tRNA(Asp/Asn) ligase.